The primary structure comprises 341 residues: Elongation factor Ts (341 aa).

Positions 80–83 (TDFV) are involved in Mg(2+) ion dislocation from EF-Tu.

The protein belongs to the EF-Ts family.

The protein localises to the cytoplasm. Associates with the EF-Tu.GDP complex and induces the exchange of GDP to GTP. It remains bound to the aminoacyl-tRNA.EF-Tu.GTP complex up to the GTP hydrolysis stage on the ribosome. The protein is Elongation factor Ts of Lactobacillus helveticus (strain DPC 4571).